We begin with the raw amino-acid sequence, 434 residues long: Cytochrome c biogenesis protein CcsB (434 aa).

The next 3 helical transmembrane spans lie at 15–35 (LRVAIVLLLLIAACSGLGTAI), 73–93 (SNWFLLLLAWLGLALLLCSLR), and 163–183 (VGPLLVHTGLIVFMVGAVVGA).

It belongs to the Ccs1/CcsB family. May interact with CcsA.

The protein localises to the cellular thylakoid membrane. Required during biogenesis of c-type cytochromes (cytochrome c6 and cytochrome f) at the step of heme attachment. The protein is Cytochrome c biogenesis protein CcsB of Synechococcus sp. (strain RCC307).